The following is a 688-amino-acid chain: Methionine--tRNA ligase (688 aa).

A 'HIGH' region motif is present at residues 13-23; sequence PYANGNFHIGH. Zn(2+) contacts are provided by C144, C147, C157, and C160. The 'KMSKS' region signature appears at 342–346; it reads KMSKS. K345 serves as a coordination point for ATP. The region spanning 582–688 is the tRNA-binding domain; it reads DFAKVDLRIA…PGAQPGMRIH (107 aa).

It belongs to the class-I aminoacyl-tRNA synthetase family. MetG type 1 subfamily. Homodimer. The cofactor is Zn(2+).

The protein resides in the cytoplasm. The enzyme catalyses tRNA(Met) + L-methionine + ATP = L-methionyl-tRNA(Met) + AMP + diphosphate. Functionally, is required not only for elongation of protein synthesis but also for the initiation of all mRNA translation through initiator tRNA(fMet) aminoacylation. This chain is Methionine--tRNA ligase, found in Acidovorax ebreus (strain TPSY) (Diaphorobacter sp. (strain TPSY)).